The sequence spans 194 residues: Mitochondrial import inner membrane translocase subunit Tim22 (194 aa).

2 disulfide bridges follow: cysteine 69/cysteine 141 and cysteine 160/cysteine 179. Helical transmembrane passes span 74-94 (ALAC…TAGI), 123-143 (MSYA…ECLI), and 170-190 (AGLK…AAID).

The protein belongs to the Tim17/Tim22/Tim23 family. As to quaternary structure, component of the TIM22 complex, whose core is composed of TIMM22, associated with peripheral protein FXC1/TIMM10B and the 70 kDa heterohexamer. In most cases, the 70 kDa complex is composed of TIMM9 and TIMM10 (TIMM10A or TIMM10B). A small fraction of the 70 kDa complex is composed of TIMM8 (TIMM8A/DDP1 or TIMM8B/DDP2) and TIMM13. The TIM22 complex also contains AGK and TIMM29. Interacts directly with TIMM9, TIMM10A and FXC1/TIMM10B. Interacts (when oxidized) with TIMM29; interaction is direct. Disulfide bonds promote efficient assembly of the TIM22 complex.

The protein resides in the mitochondrion inner membrane. In terms of biological role, essential core component of the TIM22 complex, a complex that mediates the import and insertion of multi-pass transmembrane proteins into the mitochondrial inner membrane. In the TIM22 complex, it constitutes the voltage-activated and signal-gated channel. Forms a twin-pore translocase that uses the membrane potential as external driving force in 2 voltage-dependent steps. This is Mitochondrial import inner membrane translocase subunit Tim22 (TIMM22) from Homo sapiens (Human).